Here is a 1452-residue protein sequence, read N- to C-terminus: CLIP-associating protein 1 (1452 aa).

HEAT repeat units follow at residues 68-87 (LLGM…RFRS), 88-124 (QIGT…QASN), and 163-200 (LTLS…HVGE). Residues 239 to 299 (KNFDDEDSVD…GTAKEGAGGV (61 aa)) form a disordered region. Residues 253-267 (SSASSSASSKAPQAA) show a composition bias toward low complexity. HEAT repeat units lie at residues 407 to 442 (HGAE…IRQT) and 443 to 479 (HVPR…EWQT). Disordered regions lie at residues 545–735 (SDSI…GISQ) and 771–792 (YGMY…ERSY). Positions 550–569 (SLPQSDRSSSSSQESLNRPL) are enriched in low complexity. Over residues 573-597 (RSPTGSTVSRASTATSKSTPGSLQR) the composition is skewed to polar residues. Low complexity-rich tracts occupy residues 606-621 (AATC…ASAA), 645-659 (QSSG…TPAD), and 668-682 (VVSQ…SSPG). The segment covering 715–724 (QGCSRETSPS) has biased composition (polar residues). Residues 781-792 (SDASSACSERSY) show a composition bias toward low complexity. One copy of the HEAT 6 repeat lies at 926–963 (QQFNILMRFIVDQTQTPNLKVKVAILKYIESLARQMDP). The disordered stretch occupies residues 1033–1076 (LKNSSNSSMGSPSNTIGRTPSRHSSSRASPLTSPTNCSHGGLSP). Over residues 1034 to 1046 (KNSSNSSMGSPSN) the composition is skewed to low complexity. The segment covering 1058 to 1070 (SRASPLTSPTNCS) has biased composition (polar residues). HEAT repeat units lie at residues 1256 to 1293 (EHFK…NQPA) and 1374 to 1411 (QILP…VIGE).

This sequence belongs to the CLASP family. Interacts (via C-terminus) with clip1/clip-170, and cenpe.

Its subcellular location is the cytoplasm. The protein localises to the cytoskeleton. The protein resides in the microtubule organizing center. It is found in the centrosome. It localises to the chromosome. Its subcellular location is the centromere. The protein localises to the kinetochore. The protein resides in the spindle. It is found in the golgi apparatus. It localises to the trans-Golgi network. In terms of biological role, microtubule plus-end tracking protein that promotes the stabilization of dynamic microtubules during anaphase. Plays a crucial role in chromatin-induced microtubule formation. May also act at microtubule minus ends. May be involved in the nucleation of noncentrosomal microtubules originating from the trans-Golgi network (TGN). This chain is CLIP-associating protein 1, found in Xenopus tropicalis (Western clawed frog).